The primary structure comprises 556 residues: uncharacterized protein (556 aa).

A disordered region spans residues 69–129 (RRGHTSGHAS…SSARSSSTSG (61 aa)). Low complexity-rich tracts occupy residues 74–85 (SGHASEHTSSSR) and 93–129 (SMSSSSESDSDSVSSESNPKSYSDSSTSSARSSSTSG). The helical transmembrane segment at 379-399 (LGLYIFIGVLLGLIGVIGLFI) threads the bilayer. An RING-type; atypical zinc finger spans residues 498–541 (CTICLCEYSEESPLYRELPCHHIFHPACIDPYLLKNSDLCPLCK).

The protein resides in the vacuole membrane. It is found in the cell membrane. This is an uncharacterized protein from Schizosaccharomyces pombe (strain 972 / ATCC 24843) (Fission yeast).